A 744-amino-acid chain; its full sequence is Junctophilin-3 (744 aa).

Topologically, residues 1–723 (MSSGGRFNFD…LKSSTGSAPI (723 aa)) are cytoplasmic. MORN repeat units lie at residues 15–37 (YCGGWEDGKAHGHGVCTGPKGQG), 39–60 (YTGSWSHGFEVLGVYTWPSGNT), 61–82 (YQGTWAQGKRHGIGLESKGKWV), 83–105 (YKGEWTHGFKGRYGVRECTGNGA), 107–129 (YEGTWSNGLQDGYGTETYSDGGT), and 130–152 (YQGQWVGGMRQGYGVRQSVPYGM). Residues 230 to 252 (SKSSLASQRSKQSSFRSEAGMST) are disordered. Residues 231-244 (KSSLASQRSKQSSF) show a composition bias toward low complexity. MORN repeat units follow at residues 288-310 (YVGEWKNDKRSGFGVSQRSDGLK) and 311-333 (YEGEWVSNRRHGYGCMTFPDGTK). Serine 440 carries the phosphoserine modification. At threonine 451 the chain carries Phosphothreonine. Disordered regions lie at residues 451 to 603 (TPLQ…LLEP) and 624 to 677 (CPQD…ESLR). Phosphoserine is present on serine 457. Threonine 471 carries the post-translational modification Phosphothreonine. Phosphoserine occurs at positions 475 and 506. Residues serine 699 and serine 706 each carry the phosphoserine modification. Residues 724 to 744 (LVVMVILLNIGVAILFINFFI) traverse the membrane as a helical; Anchor for type IV membrane protein segment.

It belongs to the junctophilin family. As to expression, specifically expressed in brain. Highest levels in the olfactory tubercle, caudate putamen, nucleus accumbens, hippocampal formation, piriform cortex and cerebellar cortex. Expressed in disctete neurons sites. In hippocampal formation, expressed in dendrites of hippocampal pyramidal and denate granule cells. In cerebellum, it is highly expressed in Purkinge cells, while it is weakly expressed in granular cells.

It is found in the cell membrane. Its subcellular location is the endoplasmic reticulum membrane. Functionally, junctophilins contribute to the formation of junctional membrane complexes (JMCs) which link the plasma membrane with the endoplasmic or sarcoplasmic reticulum in excitable cells. Provides a structural foundation for functional cross-talk between the cell surface and intracellular calcium release channels. JPH3 is brain-specific and appears to have an active role in certain neurons involved in motor coordination and memory. The chain is Junctophilin-3 (Jph3) from Mus musculus (Mouse).